The following is an 862-amino-acid chain: uncharacterized protein (862 aa).

Disordered stretches follow at residues 45 to 91 (HPPV…PDEV), 633 to 824 (RAEQ…GDDD), and 837 to 862 (GGSG…LLLS). 2 stretches are compositionally biased toward acidic residues: residues 57 to 69 (MDVD…EKDE) and 78 to 91 (PEVE…PDEV). Composition is skewed to basic and acidic residues over residues 633 to 650 (RAEQ…DAAK), 657 to 686 (REAE…KAEK), and 694 to 703 (TKKEKTEKKT). Positions 751–760 (EKKKRTAAKK) are enriched in basic residues. The segment covering 761 to 779 (KTVDRPSGHRPSSKKEYRS) has biased composition (basic and acidic residues).

This is an uncharacterized protein from Ictaluridae (bullhead catfishes).